Reading from the N-terminus, the 391-residue chain is Elongation factor Tu (391 aa).

Residues 10 to 201 enclose the tr-type G domain; the sequence is KPHVNIGTIG…AVDDYIPTPA (192 aa). The G1 stretch occupies residues 19–26; sequence GHVDHGKT. 19 to 26 contacts GTP; it reads GHVDHGKT. Position 26 (T26) interacts with Mg(2+). Residues 55–59 are G2; that stretch reads GITIS. A G3 region spans residues 76-79; that stretch reads DCPG. Residues 76–80 and 131–134 each bind GTP; these read DCPGH and NKVD. Residues 131-134 are G4; the sequence is NKVD. Positions 169-171 are G5; that stretch reads SAL.

It belongs to the TRAFAC class translation factor GTPase superfamily. Classic translation factor GTPase family. EF-Tu/EF-1A subfamily. Monomer.

It is found in the cytoplasm. The enzyme catalyses GTP + H2O = GDP + phosphate + H(+). Functionally, GTP hydrolase that promotes the GTP-dependent binding of aminoacyl-tRNA to the A-site of ribosomes during protein biosynthesis. This is Elongation factor Tu from Dinoroseobacter shibae (strain DSM 16493 / NCIMB 14021 / DFL 12).